The following is a 98-amino-acid chain: NADH-ubiquinone oxidoreductase chain 4L (98 aa).

3 consecutive transmembrane segments (helical) span residues 1–21 (MSIT…GMFT), 29–49 (SLLC…IVSL), and 61–81 (VILL…LVMV).

It belongs to the complex I subunit 4L family. In terms of assembly, core subunit of respiratory chain NADH dehydrogenase (Complex I) which is composed of 45 different subunits.

The protein localises to the mitochondrion inner membrane. The enzyme catalyses a ubiquinone + NADH + 5 H(+)(in) = a ubiquinol + NAD(+) + 4 H(+)(out). Its function is as follows. Core subunit of the mitochondrial membrane respiratory chain NADH dehydrogenase (Complex I) which catalyzes electron transfer from NADH through the respiratory chain, using ubiquinone as an electron acceptor. Part of the enzyme membrane arm which is embedded in the lipid bilayer and involved in proton translocation. The protein is NADH-ubiquinone oxidoreductase chain 4L (MT-ND4L) of Ochotona collaris (Collared pika).